Consider the following 63-residue polypeptide: Gallinacin-4 (63 aa).

A signal peptide spans 1 to 19; that stretch reads MKILCFFIVLLFVAVHGAV. Residues 20-25 constitute a propeptide that is removed on maturation; it reads GFSRSP. Intrachain disulfides connect C31–C59, C38–C53, and C43–C60.

Belongs to the beta-defensin family. As to expression, strong expression in the bone marrow and testis. Widely expressed. Weak expression in the ovarian stroma, but not expressed in the ovarian follicles.

It is found in the secreted. Its subcellular location is the cytoplasmic granule. Has bactericidal activity. Potent activity against S.typhimurium and S.entiriditis. This Gallus gallus (Chicken) protein is Gallinacin-4 (GAL4).